Consider the following 603-residue polypeptide: MNSPGGRNNKKKPVTPAAETGPGPPTPPPPPAETQVLLAPPSLHKRNLYLFSYPLLAAFSLLRFLAFQLGLLFVWFCERLSRRVMADKGSTAARTAAAPAQDRPQEPEVVRSYHQQAFQYISMALRIDEEEKDQKEQAIQWYKKGIEELEKGIAVTITGKGEQYDRARRLQAKMSTNLLMAKDRLQLLAKLKADIQGQHSQMEVCSDNTNLPCRNGLLKPEKGAVPKKKDPPSISSNSYSRVKAAPKSGSLGNRIPNCTGVSSSARQAGPNAPSNRGAAGKNNTRTNKPTTPTTAVRKKDMKNLRNVDSNLANLILNEIVDSGPTVKFADIAGQDLAKQALQEIVILPSIRPELFTGLRAPARGLLLFGPPGNGKTMLAKAVAAESNATFFNISAASLTSKYVGEGEKLVRALFSVARELQPSIIFIDEVDSLLCERREGEHDASRRLKTEFLIEFDGVQSGGDDRVLVMGATNRPQELDDAVLRRFTKRVYVSLPNEETRLLLLKNLLSKQGNPLNEKELTQLSRLTEGYSGSDITALAKDAALGPIRELKPEQVKNMAASEMRNIKYSDFLSSLKKIKCSVSPSTLESYIRWNKEFGDTTV.

The tract at residues 1 to 34 is disordered; that stretch reads MNSPGGRNNKKKPVTPAAETGPGPPTPPPPPAET. At 1-54 the chain is on the cytoplasmic side; sequence MNSPGGRNNKKKPVTPAAETGPGPPTPPPPPAETQVLLAPPSLHKRNLYLFSYP. The segment covering 22–32 has biased composition (pro residues); that stretch reads PGPPTPPPPPA. An intramembrane region (helical) is located at residues 55–75; the sequence is LLAAFSLLRFLAFQLGLLFVW. Residues 76 to 603 are Cytoplasmic-facing; the sequence is FCERLSRRVM…WNKEFGDTTV (528 aa). Residues 113–188 enclose the MIT domain; sequence YHQQAFQYIS…LMAKDRLQLL (76 aa). A disordered region spans residues 216-294; the sequence is GLLKPEKGAV…RTNKPTTPTT (79 aa). Positions 219-231 are enriched in basic and acidic residues; it reads KPEKGAVPKKKDP. The segment covering 281-294 has biased composition (low complexity); it reads KNNTRTNKPTTPTT. 369-376 lines the ATP pocket; it reads GPPGNGKT.

The protein belongs to the AAA ATPase family. Spastin subfamily. Homohexamer. The homohexamer is stabilized by ATP-binding. The homohexamer may adopt a ring conformation through which microtubules pass prior to being severed. Interacts with microtubules.

The protein resides in the membrane. The protein localises to the cytoplasm. It is found in the cytoskeleton. It localises to the microtubule organizing center. Its subcellular location is the centrosome. The protein resides in the perinuclear region. The protein localises to the nucleus. The catalysed reaction is n ATP + n H2O + a microtubule = n ADP + n phosphate + (n+1) alpha/beta tubulin heterodimers.. Its function is as follows. ATP-dependent microtubule severing protein that specifically recognizes and cuts microtubules that are polyglutamylated. Preferentially recognizes and acts on microtubules decorated with short polyglutamate tails: severing activity increases as the number of glutamates per tubulin rises from one to eight, but decreases beyond this glutamylation threshold. Microtubule severing promotes reorganization of cellular microtubule arrays and the release of microtubules from the centrosome following nucleation. Required for membrane traffic from the endoplasmic reticulum (ER) to the Golgi and for completion of the abscission stage of cytokinesis. Also plays a role in axon growth and the formation of axonal branches. This chain is Spastin, found in Xenopus tropicalis (Western clawed frog).